Reading from the N-terminus, the 391-residue chain is Phosphoglycerate kinase (391 aa).

Substrate contacts are provided by residues 21 to 23 (DLN), Arg36, 59 to 62 (HLGR), Arg113, and Arg146. ATP-binding positions include Lys197, Glu319, and 345–348 (GGDT).

It belongs to the phosphoglycerate kinase family. As to quaternary structure, monomer.

Its subcellular location is the cytoplasm. The enzyme catalyses (2R)-3-phosphoglycerate + ATP = (2R)-3-phospho-glyceroyl phosphate + ADP. The protein operates within carbohydrate degradation; glycolysis; pyruvate from D-glyceraldehyde 3-phosphate: step 2/5. In Shewanella sp. (strain MR-4), this protein is Phosphoglycerate kinase.